The following is a 112-amino-acid chain: Nitrogen regulatory protein P-II (112 aa).

Phosphoserine is present on S49. Y51 carries the post-translational modification O-UMP-tyrosine.

It belongs to the P(II) protein family. As to quaternary structure, homotrimer. Phosphorylation dependent on the nitrogen source and spectral light quality.

P-II indirectly controls the transcription of the GS gene (glnA). P-II prevents NR-II-catalyzed conversion of NR-I to NR-I-phosphate, the transcriptional activator of glnA. When P-II is phosphorylated, these events are reversed. In nitrogen-limiting conditions, when the ratio of Gln to 2-ketoglutarate decreases, P-II is phosphorylated which allows the deadenylation of glutamine synthetase (GS), thus activating the enzyme. The polypeptide is Nitrogen regulatory protein P-II (glnB) (Synechococcus elongatus (strain ATCC 33912 / PCC 7942 / FACHB-805) (Anacystis nidulans R2)).